Consider the following 303-residue polypeptide: Ribosomal protein uL3 glutamine methyltransferase (303 aa).

Belongs to the protein N5-glutamine methyltransferase family. PrmB subfamily.

The enzyme catalyses L-glutaminyl-[ribosomal protein uL3] + S-adenosyl-L-methionine = N(5)-methyl-L-glutaminyl-[ribosomal protein uL3] + S-adenosyl-L-homocysteine + H(+). Its function is as follows. Methylates large ribosomal subunit protein uL3 on a specific glutamine residue. In Neisseria meningitidis serogroup A / serotype 4A (strain DSM 15465 / Z2491), this protein is Ribosomal protein uL3 glutamine methyltransferase.